The following is a 474-amino-acid chain: Neuronal acetylcholine receptor subunit eat-2 (474 aa).

The N-terminal stretch at 1-21 is a signal peptide; sequence MTLKIAFFTLILLVSIERVYS. The Extracellular segment spans residues 22–237; sequence SDEEYRLLKD…MHLKRRTMYY (216 aa). Asn-95 carries N-linked (GlcNAc...) asparagine glycosylation. Cys-149 and Cys-163 form a disulfide bridge. The next 3 helical transmembrane spans lie at 238–258, 266–286, and 303–323; these read GLNWIVPSILISLSNILGFTM, ITLQITNFLSVMVFLAMVSEV, and LSIVILGLSICASLIIVNIFF. Residues 324 to 440 lie on the Cytoplasmic side of the membrane; the sequence is RHPKTHRMGD…WRFMAMVIDR (117 aa). The tract at residues 359 to 378 is disordered; sequence PRREEEKNDEEAGGDGTKLL. The helical transmembrane segment at 441-461 threads the bilayer; the sequence is LSLFLFTGLIFGTTALIFAFC.

Belongs to the ligand-gated ion channel (TC 1.A.9) family. Acetylcholine receptor (TC 1.A.9.1) subfamily. As to quaternary structure, neuronal AChR seems to be composed of two different type of subunits: alpha and beta. Expressed in pharyngeal muscle.

The protein resides in the postsynaptic cell membrane. It is found in the cell membrane. Its function is as follows. After binding acetylcholine, the AChR responds by an extensive change in conformation that affects all subunits and leads to opening of an ion-conducting channel across the plasma membrane. Nicotinic acetylcholine receptor in the MC pharyngeal motor neuron involved in pharyngeal pumping. Has a role in the determination of life span possibly via calorific restriction which affects growth rate, although this is independent of metabolic activity. Plays a role in the defense against the accumulation of ingested live pathogenic bacteria in the intestine. The sequence is that of Neuronal acetylcholine receptor subunit eat-2 from Caenorhabditis elegans.